The primary structure comprises 523 residues: Probable glucose-1-phosphate adenylyltransferase large subunit, chloroplastic (523 aa).

Belongs to the bacterial/plant glucose-1-phosphate adenylyltransferase family. As to quaternary structure, heterotetramer.

Its subcellular location is the plastid. The protein localises to the chloroplast. It carries out the reaction alpha-D-glucose 1-phosphate + ATP + H(+) = ADP-alpha-D-glucose + diphosphate. Its pathway is glycan biosynthesis; starch biosynthesis. Its activity is regulated as follows. Activated by 3'phosphoglycerate, inhibited by orthophosphate. Allosteric regulation. In terms of biological role, this protein plays a role in synthesis of starch. It catalyzes the synthesis of the activated glycosyl donor, ADP-glucose from Glc-1-P and ATP. The polypeptide is Probable glucose-1-phosphate adenylyltransferase large subunit, chloroplastic (Arabidopsis thaliana (Mouse-ear cress)).